We begin with the raw amino-acid sequence, 77 residues long: uncharacterized protein (77 aa).

Residues 49-71 (LVIASLILAIILLGILYYISYQM) form a helical membrane-spanning segment.

Its subcellular location is the membrane. This is an uncharacterized protein from Archaeoglobus fulgidus (strain ATCC 49558 / DSM 4304 / JCM 9628 / NBRC 100126 / VC-16).